Consider the following 359-residue polypeptide: MKPSMRAKLDHLDTRLAELNSLLTSEEATKDMDAYRKLTREHSDIATVVEQFYLYKQAEADAQAAEEMRKDPEMKEFADEEQKQALATMEALESTLQKLLLPKDENDERNVFLEIRAGTGGDEGALFAGDLLRMYTRFAERQGWKVEVVSAAESDLGGYKEVVLRLVGQAVYSRLKFESGGHRVQRVPQTETQGRIHTSACTVAVMPETDELEAVKINPAELRIDTFRASGAGGQHINKTDSAIRITHLPTGTVVECQDDRSQHRNREQAMKVLVSRIMDAREREKHQLEAQTRKSLVGTGDRSDRIRTYNFPQGRITDHRINLTLYKIDAMMDGDIDDLCNALASEHQAELLAALGDN.

Residue Gln235 is modified to N5-methylglutamine.

It belongs to the prokaryotic/mitochondrial release factor family. In terms of processing, methylated by PrmC. Methylation increases the termination efficiency of RF1.

The protein localises to the cytoplasm. Its function is as follows. Peptide chain release factor 1 directs the termination of translation in response to the peptide chain termination codons UAG and UAA. This is Peptide chain release factor 1 from Polynucleobacter necessarius subsp. necessarius (strain STIR1).